The following is a 270-amino-acid chain: Hydroxyethylthiazole kinase (270 aa).

Substrate is bound at residue Met47. Residues Arg123 and Thr169 each coordinate ATP. A substrate-binding site is contributed by Gly196.

The protein belongs to the Thz kinase family. Mg(2+) serves as cofactor.

It catalyses the reaction 5-(2-hydroxyethyl)-4-methylthiazole + ATP = 4-methyl-5-(2-phosphooxyethyl)-thiazole + ADP + H(+). The protein operates within cofactor biosynthesis; thiamine diphosphate biosynthesis; 4-methyl-5-(2-phosphoethyl)-thiazole from 5-(2-hydroxyethyl)-4-methylthiazole: step 1/1. Its function is as follows. Catalyzes the phosphorylation of the hydroxyl group of 4-methyl-5-beta-hydroxyethylthiazole (THZ). This is Hydroxyethylthiazole kinase from Roseiflexus sp. (strain RS-1).